The primary structure comprises 455 residues: UDP-glycosyltransferase 79B2 (455 aa).

UDP-alpha-D-glucose-binding positions include serine 266, 325-327 (VQQ), 342-350 (HCGFGSMWE), and 364-367 (LGDQ).

The protein belongs to the UDP-glycosyltransferase family.

The protein is UDP-glycosyltransferase 79B2 (UGT79B2) of Arabidopsis thaliana (Mouse-ear cress).